A 248-amino-acid polypeptide reads, in one-letter code: Isoprenyl transferase (248 aa).

The active site involves aspartate 28. Aspartate 28 is a binding site for Mg(2+). Residues 29 to 32 (GNGR), tryptophan 33, arginine 41, histidine 45, and 73 to 75 (SSE) contribute to the substrate site. Asparagine 76 acts as the Proton acceptor in catalysis. Substrate is bound by residues tryptophan 77, arginine 79, arginine 196, and 202-204 (RLS). Position 215 (glutamate 215) interacts with Mg(2+).

The protein belongs to the UPP synthase family. In terms of assembly, homodimer. Mg(2+) is required as a cofactor.

Functionally, catalyzes the condensation of isopentenyl diphosphate (IPP) with allylic pyrophosphates generating different type of terpenoids. This is Isoprenyl transferase from Zymomonas mobilis subsp. mobilis (strain ATCC 31821 / ZM4 / CP4).